The following is a 315-amino-acid chain: Acetyl-coenzyme A carboxylase carboxyl transferase subunit alpha (315 aa).

The 254-residue stretch at 39–292 (LEDKSAKLLR…GDALEQELNG (254 aa)) folds into the CoA carboxyltransferase C-terminal domain.

This sequence belongs to the AccA family. In terms of assembly, acetyl-CoA carboxylase is a heterohexamer composed of biotin carboxyl carrier protein (AccB), biotin carboxylase (AccC) and two subunits each of ACCase subunit alpha (AccA) and ACCase subunit beta (AccD).

Its subcellular location is the cytoplasm. It catalyses the reaction N(6)-carboxybiotinyl-L-lysyl-[protein] + acetyl-CoA = N(6)-biotinyl-L-lysyl-[protein] + malonyl-CoA. It participates in lipid metabolism; malonyl-CoA biosynthesis; malonyl-CoA from acetyl-CoA: step 1/1. Component of the acetyl coenzyme A carboxylase (ACC) complex. First, biotin carboxylase catalyzes the carboxylation of biotin on its carrier protein (BCCP) and then the CO(2) group is transferred by the carboxyltransferase to acetyl-CoA to form malonyl-CoA. In Sphingopyxis alaskensis (strain DSM 13593 / LMG 18877 / RB2256) (Sphingomonas alaskensis), this protein is Acetyl-coenzyme A carboxylase carboxyl transferase subunit alpha.